The sequence spans 334 residues: Holliday junction branch migration complex subunit RuvB (334 aa).

Positions Ala4–Tyr184 are large ATPase domain (RuvB-L). Residues Ile23, Arg24, Gly65, Lys68, Thr69, Thr70, Glu131–Tyr133, Arg174, Tyr184, and Arg221 each bind ATP. Thr69 serves as a coordination point for Mg(2+). A small ATPAse domain (RuvB-S) region spans residues Ser185–Asp255. The segment at Ser258–Asp334 is head domain (RuvB-H). 3 residues coordinate DNA: Arg294, Arg313, and Arg318.

Belongs to the RuvB family. As to quaternary structure, homohexamer. Forms an RuvA(8)-RuvB(12)-Holliday junction (HJ) complex. HJ DNA is sandwiched between 2 RuvA tetramers; dsDNA enters through RuvA and exits via RuvB. An RuvB hexamer assembles on each DNA strand where it exits the tetramer. Each RuvB hexamer is contacted by two RuvA subunits (via domain III) on 2 adjacent RuvB subunits; this complex drives branch migration. In the full resolvosome a probable DNA-RuvA(4)-RuvB(12)-RuvC(2) complex forms which resolves the HJ.

The protein resides in the cytoplasm. The enzyme catalyses ATP + H2O = ADP + phosphate + H(+). Functionally, the RuvA-RuvB-RuvC complex processes Holliday junction (HJ) DNA during genetic recombination and DNA repair, while the RuvA-RuvB complex plays an important role in the rescue of blocked DNA replication forks via replication fork reversal (RFR). RuvA specifically binds to HJ cruciform DNA, conferring on it an open structure. The RuvB hexamer acts as an ATP-dependent pump, pulling dsDNA into and through the RuvAB complex. RuvB forms 2 homohexamers on either side of HJ DNA bound by 1 or 2 RuvA tetramers; 4 subunits per hexamer contact DNA at a time. Coordinated motions by a converter formed by DNA-disengaged RuvB subunits stimulates ATP hydrolysis and nucleotide exchange. Immobilization of the converter enables RuvB to convert the ATP-contained energy into a lever motion, pulling 2 nucleotides of DNA out of the RuvA tetramer per ATP hydrolyzed, thus driving DNA branch migration. The RuvB motors rotate together with the DNA substrate, which together with the progressing nucleotide cycle form the mechanistic basis for DNA recombination by continuous HJ branch migration. Branch migration allows RuvC to scan DNA until it finds its consensus sequence, where it cleaves and resolves cruciform DNA. The chain is Holliday junction branch migration complex subunit RuvB from Actinobacillus pleuropneumoniae serotype 5b (strain L20).